Here is a 728-residue protein sequence, read N- to C-terminus: Catalase-peroxidase 1 (728 aa).

A cross-link (tryptophyl-tyrosyl-methioninium (Trp-Tyr) (with M-244)) is located at residues 91–218 (WHGAGTYRIA…LAAVQMGLIY (128 aa)). His-92 serves as the catalytic Proton acceptor. The tryptophyl-tyrosyl-methioninium (Tyr-Met) (with W-91) cross-link spans 218 to 244 (YVNPEGPDGKPDPVAAARDIRDTFARM). Position 259 (His-259) interacts with heme b.

The protein belongs to the peroxidase family. Peroxidase/catalase subfamily. As to quaternary structure, homodimer or homotetramer. Heme b is required as a cofactor. In terms of processing, formation of the three residue Trp-Tyr-Met cross-link is important for the catalase, but not the peroxidase activity of the enzyme.

The catalysed reaction is H2O2 + AH2 = A + 2 H2O. It carries out the reaction 2 H2O2 = O2 + 2 H2O. In terms of biological role, bifunctional enzyme with both catalase and broad-spectrum peroxidase activity. The sequence is that of Catalase-peroxidase 1 from Burkholderia vietnamiensis (strain G4 / LMG 22486) (Burkholderia cepacia (strain R1808)).